Reading from the N-terminus, the 163-residue chain is Nucleotide-binding protein BA_1166 (163 aa).

It belongs to the YajQ family.

In terms of biological role, nucleotide-binding protein. This chain is Nucleotide-binding protein BA_1166, found in Bacillus anthracis.